Here is a 1446-residue protein sequence, read N- to C-terminus: MSKQQRRKGNAKNASSAAAHEYLAQGGATFVGLTPEMNIFEVASSNRLHQVVEIDDETRIVMKKLTKKDCQTREKGLKELMELINTENSSIESSYEHFCGLVAQLTTDGSPTVRMLTMKVISQFLTKLKKSASKGLKKIIPFVLFAKSDVTNGVAAAASAVIRDGFDADKKRQVVELFVPNTFDLAAKIAEGKHELSLPAEYDASEDLETRKMRLETQSLNTFLSYIKEYGNESKLWEEPARKLFSNSEFIKKTFAGKKEALKVQLLNISYKFSDNIEVILSNPVISTYIQASLDAQTFSTECATAWEGILILLPDERFHAKCSLQKGIYPRLLNLIRKKGNHWRVLKHYLLPAVSVLLQKLENPALITSIITSFTDNLPWQAEASMNAIHCWFCTFSDFVKWILGNDRINLEILKDLSPLIVEMSNQSMHFNTAEATECISGLIHWIIEKKVLENPAEFFDLLKTSIYEVAPPEKSRLFADSLTLPAKHLELAHLHGNLLSNPDVDFHIIRNLARASNSEYFEETCRNINNFEFIENSDRFDMLQAVEIVKLIEMKPSLSLQIKNNHVGRQLLLSENSEIWEKSLKNVPAGVFQEMVNFWHEKRNGKAIAQAVNFLKKMGIQLDTNAAAENVDFLISLLQSLDSKEDPEERKNLVLKLLSALFDAEDEPKLEHFESLKSHLNGDFEQFFEKLFANMEEEDAERVLEIAARFDKLVGFCDADSRGEIAGKMILGRREFDEMSEKLHFLELDVLTVSQHTTIITDALSRPIEHLEEKEATKMVKELGRLALFSVASNYNSSIHQLFAWQMIRVISALGNRYCLKFLDEELQQLRIELEKRVIKSEEIQKLINDGCCCAPNFITDTYGIPEKRQKFEEYSEDMDTKIETIYLKTDTPLEYVEKVFEASQSENSFPLFQFDQSKKYEWLANLTFVKRFIQCGGEIFRAENLEFRDFTLCGIITVLDTSTDILIDSPHSFSENPLLEALTTLYLELFVVLTDATKRGAYSEQSVEEWNEFYTPTIHTYCIRLFRTIRRDQQPTPFVRALLRALFVISEFPTSFSNDDDVANQEFIPELSVFKYPAFQESCIAQAFSLFASNNEHIQLIAYSVARLLMPIMFKLENAAALKSNEDSELPVSTNRRKLSLPVMISKSYPKDHHNPHVGPLLLDLTLLPLENTKDSGFSQEHRVAYCDVIDPFFKNALNALMLDQPFEFRQVPIGCRIPKSQERAYYLESDLSASPIFFDKFASRLLFKSMTLLPAAIRLFYKGMPNCFMPMFQETVTKYASRLLIEQELGKVREAKFEGEMKVRTVPVTGEIIAEYVVEETKMKLTIGLPPDYPLSVPSLTLDKAIVKTDRAKKWLLQLNAYLFHQNGAILEGIEMWKRNVDKGVEGVEDCTICMMTVHQQTHQLPKIKCKQCKNKFHSNCLYKWFESSNQSTCPLCRNNFT.

HEAT repeat units lie at residues 71-108 (QTRE…LTTD), 115-153 (MLTM…VTNG), 324-361 (SLQK…LLQK), 363-399 (ENPA…TFSD), 413-450 (EILK…WIIE), 630-669 (AENV…AEDE), 684-721 (GDFE…FCDA), 1046-1083 (LRAL…PAFQ), 1107-1144 (SVAR…KLSL), 1165-1202 (LLDL…NALN), and 1251-1289 (FKSM…RLLI). The RING-type zinc-finger motif lies at 1395–1442 (CTICMMTVHQQTHQLPKIKCKQCKNKFHSNCLYKWFESSNQSTCPLCR).

The protein belongs to the LTN1 family. As to quaternary structure, component of the ribosome quality control complex (RQC), composed of at least the E3 ubiquitin ligase ltn1 and nemf. The complex probably also contains tcf25 as well as vcp/p97 and its ubiquitin-binding cofactors. RQC forms a stable complex with 60S ribosomal subunits.

The protein resides in the cytoplasm. It localises to the cytosol. It catalyses the reaction S-ubiquitinyl-[E2 ubiquitin-conjugating enzyme]-L-cysteine + [acceptor protein]-L-lysine = [E2 ubiquitin-conjugating enzyme]-L-cysteine + N(6)-ubiquitinyl-[acceptor protein]-L-lysine.. Its pathway is protein modification; protein ubiquitination. Functionally, E3 ubiquitin-protein ligase. Component of the ribosome quality control complex (RQC), a ribosome-associated complex that mediates ubiquitination and extraction of incompletely synthesized nascent chains for proteasomal degradation. Ubiquitination leads to vcp/p97 recruitment for extraction and degradation of the incomplete translation product. The protein is E3 ubiquitin-protein ligase listerin of Caenorhabditis elegans.